Here is a 344-residue protein sequence, read N- to C-terminus: L-rhamnose-proton symporter (344 aa).

10 helical membrane passes run alanine 4–alanine 24, tryptophan 38–leucine 58, phenylalanine 68–isoleucine 88, methionine 101–isoleucine 121, threonine 131–valine 151, leucine 175–alanine 195, leucine 214–isoleucine 234, leucine 259–glycine 279, methionine 290–leucine 310, and valine 323–alanine 343.

Belongs to the L-rhamnose transporter (TC 2.A.7.6) family.

It is found in the cell inner membrane. The enzyme catalyses L-rhamnopyranose(in) + H(+)(in) = L-rhamnopyranose(out) + H(+)(out). In terms of biological role, uptake of L-rhamnose across the cytoplasmic membrane with the concomitant transport of protons into the cell (symport system). The sequence is that of L-rhamnose-proton symporter from Klebsiella pneumoniae subsp. pneumoniae (strain ATCC 700721 / MGH 78578).